Reading from the N-terminus, the 361-residue chain is MSVQVSPEQMATLKATLLNTPGNVPLHERFRALFMLKAVGGDEVVDIVSEGLKDPSPLLKHELAYVLGQLLNTRALPTLSRVLENPTGEHCSMVRHEAAEALGAIGAEESLPILRKYMQDENREVRETCEIAVGKIEFDLSEEGKKTNANPDFPTIDPAPSAAPSDIPSLRADLLNTSLPLFQRYRAMFALRDFGAGSKEAVEALADGFRDGSALFRHEIAYIFGQLSSPYSIPSLLSRLRDAKEDDMVRHEAAEALGGIASDGVESENPEVVLPEDERLPEGGVLAVLREWAVKADAPTVVRESCQVAIDMWEYENSADQFNPLDSLSAKQEEREKTEKVNTTGMERSAHAAVAAMGIAA.

HEAT-like PBS-type repeat units lie at residues 59-85 (LKHE…VLEN), 94-120 (VRHE…YMQD), 183-211 (QRYR…GFRD), and 216-242 (FRHE…RLRD). H61, E62, H96, and E97 together coordinate Fe cation. Residues H218, E219, H251, and E252 each contribute to the Fe cation site.

Belongs to the deoxyhypusine hydroxylase family. It depends on Fe(2+) as a cofactor.

The protein resides in the cytoplasm. Its subcellular location is the nucleus. The enzyme catalyses [eIF5A protein]-deoxyhypusine + AH2 + O2 = [eIF5A protein]-hypusine + A + H2O. The protein operates within protein modification; eIF5A hypusination. Functionally, catalyzes the hydroxylation of the N(6)-(4-aminobutyl)-L-lysine intermediate to form hypusine, an essential post-translational modification only found in mature eIF-5A factor. The polypeptide is Deoxyhypusine hydroxylase (Cryptococcus neoformans var. neoformans serotype D (strain JEC21 / ATCC MYA-565) (Filobasidiella neoformans)).